Reading from the N-terminus, the 1161-residue chain is Translation initiation factor IF-2 (1161 aa).

The segment at 67–561 (KSSFKAANEQ…RRAMELRAAK (495 aa)) is disordered. Positions 83 to 105 (QNKDSNSRSKPLNKEKPSKESLN) are enriched in basic and acidic residues. A compositionally biased stretch (polar residues) spans 139–154 (SRISNLQSQVLPNSHN). Composition is skewed to basic and acidic residues over residues 164–180 (NPNE…EKKS) and 211–220 (KDIKANKKND). Composition is skewed to low complexity over residues 224–250 (NQRP…PRIK) and 268–282 (NSNR…PPSN). 3 stretches are compositionally biased toward polar residues: residues 295–311 (RQVT…QGVS), 352–362 (RQGAPNRQGSP), and 380–393 (LNRS…QNPS). The span at 412–432 (ASDKEKLNRSNFEKQKVEPPK) shows a compositional bias: basic and acidic residues. A compositionally biased stretch (polar residues) spans 440 to 461 (SRLNASPTAKKTPHRSFTNNSK). 2 stretches are compositionally biased toward basic and acidic residues: residues 464-478 (GRSD…EALR) and 543-561 (KETT…RAAK). The region spanning 653 to 830 (KRPPVITVMG…EVEDLQANPE (178 aa)) is the tr-type G domain. The segment at 662-669 (GHVDHGKT) is G1. 662 to 669 (GHVDHGKT) is a GTP binding site. The interval 687–691 (GITQH) is G2. The interval 712–715 (DTPG) is G3. GTP is bound by residues 712 to 716 (DTPGH) and 766 to 769 (NKID). Residues 766 to 769 (NKID) are G4. Residues 802 to 804 (SAI) form a G5 region.

The protein belongs to the TRAFAC class translation factor GTPase superfamily. Classic translation factor GTPase family. IF-2 subfamily.

It localises to the cytoplasm. Its function is as follows. One of the essential components for the initiation of protein synthesis. Protects formylmethionyl-tRNA from spontaneous hydrolysis and promotes its binding to the 30S ribosomal subunits. Also involved in the hydrolysis of GTP during the formation of the 70S ribosomal complex. This Prochlorococcus marinus (strain MIT 9515) protein is Translation initiation factor IF-2.